The following is a 191-amino-acid chain: Peptidyl-tRNA hydrolase (191 aa).

Y17 contributes to the tRNA binding site. H22 serves as the catalytic Proton acceptor. TRNA contacts are provided by Y68, N70, and N116.

The protein belongs to the PTH family. As to quaternary structure, monomer.

Its subcellular location is the cytoplasm. The catalysed reaction is an N-acyl-L-alpha-aminoacyl-tRNA + H2O = an N-acyl-L-amino acid + a tRNA + H(+). Functionally, hydrolyzes ribosome-free peptidyl-tRNAs (with 1 or more amino acids incorporated), which drop off the ribosome during protein synthesis, or as a result of ribosome stalling. Its function is as follows. Catalyzes the release of premature peptidyl moieties from peptidyl-tRNA molecules trapped in stalled 50S ribosomal subunits, and thus maintains levels of free tRNAs and 50S ribosomes. The sequence is that of Peptidyl-tRNA hydrolase from Mycobacterium tuberculosis (strain ATCC 25177 / H37Ra).